The sequence spans 247 residues: PsbP domain-containing protein 3, chloroplastic (247 aa).

Residues 1–26 (MAAISPWLSSPQSFSNPRVTITDSRR) constitute a chloroplast transit peptide. The N-terminal 54 residues, 27–80 (CSSISAAISVLDSSNEEQHRISSRDHVGMKRRDVMLQIASSVFFLPLAISPAFA), are a transit peptide targeting the thylakoid.

It belongs to the PsbP family.

It localises to the plastid. It is found in the chloroplast thylakoid lumen. The sequence is that of PsbP domain-containing protein 3, chloroplastic (PPD3) from Arabidopsis thaliana (Mouse-ear cress).